We begin with the raw amino-acid sequence, 347 residues long: ATP-dependent (S)-NAD(P)H-hydrate dehydratase (347 aa).

A YjeF C-terminal domain is found at 53-344 (TLQLVRNIIP…AEVGAAFSKL (292 aa)). Phosphotyrosine is present on Tyr-85. Residues Gly-153 and 206-212 (NHVEFSR) each bind (6S)-NADPHX. Asn-240 carries N-linked (GlcNAc...) asparagine glycosylation. ATP-binding positions include 246-250 (KGERD) and 265-274 (GSSRRCGGQG). A (6S)-NADPHX-binding site is contributed by Asp-275. A glycan (N-linked (GlcNAc...) asparagine) is linked at Asn-297.

Belongs to the NnrD/CARKD family. The cofactor is Mg(2+).

It localises to the mitochondrion. It carries out the reaction (6S)-NADHX + ATP = ADP + phosphate + NADH + H(+). It catalyses the reaction (6S)-NADPHX + ATP = ADP + phosphate + NADPH + H(+). Catalyzes the dehydration of the S-form of NAD(P)HX at the expense of ATP, which is converted to ADP. Together with NAD(P)HX epimerase, which catalyzes the epimerization of the S- and R-forms, the enzyme allows the repair of both epimers of NAD(P)HX, a damaged form of NAD(P)H that is a result of enzymatic or heat-dependent hydration. This chain is ATP-dependent (S)-NAD(P)H-hydrate dehydratase, found in Homo sapiens (Human).